The primary structure comprises 324 residues: Leucine carboxyl methyltransferase 1 (324 aa).

S-adenosyl-L-methionine is bound by residues Arg-74, Gly-101, Asp-128, 172-173 (DL), and Glu-196.

Belongs to the methyltransferase superfamily. LCMT family.

The enzyme catalyses [phosphatase 2A protein]-C-terminal L-leucine + S-adenosyl-L-methionine = [phosphatase 2A protein]-C-terminal L-leucine methyl ester + S-adenosyl-L-homocysteine. Functionally, methylates the carboxyl group of the C-terminal leucine residue of protein phosphatase 2A catalytic subunits to form alpha-leucine ester residues. This chain is Leucine carboxyl methyltransferase 1 (PPM1), found in Yarrowia lipolytica (strain CLIB 122 / E 150) (Yeast).